Reading from the N-terminus, the 2215-residue chain is Unconventional myosin-VIIa (2215 aa).

Residues 65–741 (HGVEDMIRLG…HDMLLEVERD (677 aa)) enclose the Myosin motor domain. Position 158 to 165 (158 to 165 (GESGAGKT)) interacts with ATP. The tract at residues 632–639 (FVRCIKPN) is actin-binding. IQ domains follow at residues 745–765 (TDRV…SNFL), 768–788 (KNAA…KNYG), 791–811 (RLGF…QQYR), 814–834 (RQRI…KAFR), and 837–857 (LWAV…RLHQ). An SAH region spans residues 858–935 (RLRAEYLWRL…LEQMERARHE (78 aa)). In terms of domain architecture, MyTH4 1 spans 1017 to 1253 (YTRRPLKQPL…PSWLELQATK (237 aa)). Residues 1258 to 1602 (IMLPVTFMDG…LVVTFLEGLR (345 aa)) enclose the FERM 1 domain. Ser-1569 is modified (phosphoserine). Thr-1571 is modified (phosphothreonine). An SH3 domain is found at 1603–1672 (KRSKYVVALQ…PTDSVYVMPT (70 aa)). A MyTH4 2 domain is found at 1747–1896 (HTREPLKQAL…PHLVEVEAIQ (150 aa)). An FERM 2 domain is found at 1902 to 2205 (IFHKVYFPDD…SYISQMLTAM (304 aa)).

This sequence belongs to the TRAFAC class myosin-kinesin ATPase superfamily. Myosin family. Might homodimerize in a two headed molecule through the formation of a coiled-coil rod. Identified in a complex with USH1C and USH1G. Interacts with MYRIP. Interacts with RPE65. Interacts with CIB2. May interact with CALM. Interacts with WHRN. Interacts with PLEKHB1 (via PH domain). Interacts with PCDH15. Interacts with TWF2. Interacts with USH1G. Interacts with MYH9. Interacts (via MyTH4-FERM domains) with cytoplasmic regions of ADGRV1 and USH2A. Interacts with PDZD7 (via MyTH4-FERM domains). Interacts with CALML4. As to expression, expressed in the pigment epithelium and the photoreceptor cells of the retina. Also found in kidney, liver, testis, cochlea, lymphocytes. Not expressed in brain.

It is found in the cytoplasm. The protein resides in the cell cortex. Its subcellular location is the cytoskeleton. It localises to the synapse. Its activity is regulated as follows. ATP hydrolysis is inhibited by Mg(2+), already at a concentration of 0.4 mM. In terms of biological role, myosins are actin-based motor molecules with ATPase activity. Unconventional myosins serve in intracellular movements. Their highly divergent tails bind to membranous compartments, which are then moved relative to actin filaments. In the retina, plays an important role in the renewal of the outer photoreceptor disks. Plays an important role in the distribution and migration of retinal pigment epithelial (RPE) melanosomes and phagosomes, and in the regulation of opsin transport in retinal photoreceptors. In the inner ear, plays an important role in differentiation, morphogenesis and organization of cochlear hair cell bundles. Involved in hair-cell vesicle trafficking of aminoglycosides, which are known to induce ototoxicity. Motor protein that is a part of the functional network formed by USH1C, USH1G, CDH23 and MYO7A that mediates mechanotransduction in cochlear hair cells. Required for normal hearing. In Homo sapiens (Human), this protein is Unconventional myosin-VIIa.